The following is a 433-amino-acid chain: PBSX phage terminase large subunit (433 aa).

The protein to B.subtilis YqaT and phage SPP1 terminase large subunit. As to quaternary structure, dimer of a small and a large subunit.

Functionally, functions as a terminase. This chain is PBSX phage terminase large subunit (xtmB), found in Bacillus subtilis (strain 168).